Consider the following 140-residue polypeptide: Odorant-binding protein 10 (140 aa).

A signal peptide spans methionine 1 to serine 25.

The protein belongs to the PBP/GOBP family. High-level expression in female mouth parts, particularly in the proboscis (at protein level). Low-level expression in female antenna (at protein level). Female salivary gland. Female chemosensory organs: antenna, palp and proboscis. Male antenna, wing and maxillary palp. Expressed at higher levels in male tissues compared to female tissues. Not detected in midgut.

It is found in the secreted. Functionally, involved in modulation of blood-feeding behavior and capacity in female mosquitoes. Required for normal oviposition. Required for normal fecundity and fertility of female mosquitoes. Required for normal expression of VGA1 gene, which encodes the egg yolk protein vitellogenin-A1. Required for normal female longevity when mosquitoes are maintained on regular sugar meal. (Microbial infection) Facilitates shedding of dengue virus type 2 particles into mosquito saliva. Does not affect dengue virus type 2 replication or infection prevalence in midgut and salivary glands at 14 days after blood feeding. Its function is as follows. (Microbial infection) Facilitates shedding of Zika virus particles into mosquito saliva. Does not affect Zika virus replication or infection prevalence in midgut and salivary glands at 14 days after blood feeding. The protein is Odorant-binding protein 10 of Aedes aegypti (Yellowfever mosquito).